The following is a 500-amino-acid chain: Prostacyclin synthase (500 aa).

The chain crosses the membrane as a helical span at residues 1-20 (MSWAVVFGLLAALLLLLLLT). Substrate-binding positions include Arg-106, Leu-112, Asn-287, 358 to 359 (TR), and Arg-382. Cys-441 is a binding site for heme.

It belongs to the cytochrome P450 family. Heme is required as a cofactor.

It is found in the endoplasmic reticulum membrane. The catalysed reaction is prostaglandin H2 = prostaglandin I2. It catalyses the reaction a hydroperoxyeicosatetraenoate = an oxoeicosatetraenoate + H2O. The enzyme catalyses (15S)-hydroperoxy-(5Z,8Z,11Z,13E)-eicosatetraenoate = 15-oxo-(5Z,8Z,11Z,13E)-eicosatetraenoate + H2O. It carries out the reaction (15S)-hydroperoxy-(5Z,8Z,11Z,13E)-eicosatetraenoate + AH2 = (15S)-hydroxy-(5Z,8Z,11Z,13E)-eicosatetraenoate + A + H2O. In terms of biological role, catalyzes the biosynthesis and metabolism of eicosanoids. Catalyzes the isomerization of prostaglandin H2 to prostacyclin (= prostaglandin I2), a potent mediator of vasodilation and inhibitor of platelet aggregation. Additionally, displays dehydratase activity, toward hydroperoxyeicosatetraenoates (HPETEs), especially toward (15S)-hydroperoxy-(5Z,8Z,11Z,13E)-eicosatetraenoate (15(S)-HPETE). This chain is Prostacyclin synthase (PTGIS), found in Bos taurus (Bovine).